We begin with the raw amino-acid sequence, 348 residues long: Rhodopsin (348 aa).

M1 is modified (N-acetylmethionine). At 1–36 (MNGTEGLNFYVPFSNKTGVVRSPFEYPQYYLAEPWQ) the chain is on the extracellular side. N2 and N15 each carry an N-linked (GlcNAc...) asparagine glycan. The chain crosses the membrane as a helical span at residues 37–61 (FSVLAAYMFLLIVLGFPINFLTLYV). The Cytoplasmic segment spans residues 62–73 (TVQHKKLRTPLN). A helical transmembrane segment spans residues 74-96 (YIPLNLAVANLFMVFGGFTTTLY). Residues 97-110 (TSLHAYFVFGPTGC) lie on the Extracellular side of the membrane. C110 and C187 form a disulfide bridge. A helical membrane pass occupies residues 111–133 (NLEGFFATLGGEIALWSLVVLAI). The short motif at 134–136 (ERY) is the 'Ionic lock' involved in activated form stabilization element. At 134 to 152 (ERYVVVCKPMSNFRFGENH) the chain is on the cytoplasmic side. The chain crosses the membrane as a helical span at residues 153-173 (AIMGLALTWVMAMACAAPPLV). Over 174–202 (GWSRYIPEGMQCSCGIDYYTSRQEVNNES) the chain is Extracellular. Residue E201 participates in Zn(2+) binding. The chain crosses the membrane as a helical span at residues 203 to 224 (FVIYMFVVHFTIPLVIIFFCYG). The Cytoplasmic segment spans residues 225 to 252 (QLVFTVKEAAAQQQESATTQKAEKEVTR). Residues 253–274 (MVIIMVVAFLICWVPYASVAFY) traverse the membrane as a helical segment. The Extracellular portion of the chain corresponds to 275–286 (IFTHQGSDFGPI). Zn(2+) is bound at residue Q279. A helical transmembrane segment spans residues 287 to 308 (FMTIPSFFAKSSSIYNPVIYIM). K296 bears the N6-(retinylidene)lysine mark. At 309–348 (MNKQLRNCMLTTLCCGRNPLGDDEASTTASKTETSQVAPA) the chain is on the cytoplasmic side. Residues C322 and C323 are each lipidated (S-palmitoyl cysteine). The interaction with SAG stretch occupies residues 330-348 (DDEASTTASKTETSQVAPA). Residue S334 is modified to Phosphoserine. Residues T335 and T336 each carry the phosphothreonine modification. At S338 the chain carries Phosphoserine. T340 and T342 each carry phosphothreonine. S343 is modified (phosphoserine).

It belongs to the G-protein coupled receptor 1 family. Opsin subfamily. As to quaternary structure, homodimer. May form a complex composed of RHO, GRK1 and RCVRN in a Ca(2+)-dependent manner; RCVRN prevents the interaction between GRK1 and RHO. Interacts with GRK1. Interacts (phosphorylated form) with SAG. Interacts with GNAT1. Interacts with GNAT3. SAG and G-proteins compete for a common binding site. Interacts with PRCD; the interaction promotes PRCD stability. Forms a complex with ASAP1 and ARF4. Forms a complex with ASAP1, RAB11A, Rabin8/RAB3IP, ARF4 and RAB11FIP3; the complex regulates Golgi-to-cilia rhodopsin/RHO transport in photoreceptors. In terms of processing, phosphorylated on some or all of the serine and threonine residues present in the C-terminal region. Contains one covalently linked retinal chromophore. Upon light absorption, the covalently bound 11-cis-retinal is converted to all-trans-retinal. After hydrolysis of the Schiff base and release of the covalently bound all-trans-retinal, active rhodopsin is regenerated by binding of a fresh molecule of 11-cis-retinal.

It is found in the membrane. Its subcellular location is the cell projection. It localises to the cilium. The protein localises to the photoreceptor outer segment. Functionally, photoreceptor required for image-forming vision at low light intensity. Required for photoreceptor cell viability after birth. Light-induced isomerization of 11-cis to all-trans retinal triggers a conformational change that activates signaling via G-proteins. Subsequent receptor phosphorylation mediates displacement of the bound G-protein alpha subunit by the arrestin SAG and terminates signaling. In Globicephala melas (Long-finned pilot whale), this protein is Rhodopsin (RHO).